Here is a 227-residue protein sequence, read N- to C-terminus: Orotidine 5'-phosphate decarboxylase (227 aa).

Residues Asp8, Lys30, 57–66 (DLKFHDIPNT), Thr116, Arg177, Gln186, Gly206, and Arg207 contribute to the substrate site. Residue Lys59 is the Proton donor of the active site.

Belongs to the OMP decarboxylase family. Type 1 subfamily. Homodimer.

It catalyses the reaction orotidine 5'-phosphate + H(+) = UMP + CO2. Its pathway is pyrimidine metabolism; UMP biosynthesis via de novo pathway; UMP from orotate: step 2/2. In terms of biological role, catalyzes the decarboxylation of orotidine 5'-monophosphate (OMP) to uridine 5'-monophosphate (UMP). This chain is Orotidine 5'-phosphate decarboxylase, found in Acinetobacter baumannii (strain AB307-0294).